A 695-amino-acid polypeptide reads, in one-letter code: Elongation factor G (695 aa).

One can recognise a tr-type G domain in the interval 8 to 282; it reads EKTRNIGIMA…AVLDYLPAPT (275 aa). Residues 17 to 24, 81 to 85, and 135 to 138 contribute to the GTP site; these read AHIDAGKT, DTPGH, and NKMD.

It belongs to the TRAFAC class translation factor GTPase superfamily. Classic translation factor GTPase family. EF-G/EF-2 subfamily.

It is found in the cytoplasm. In terms of biological role, catalyzes the GTP-dependent ribosomal translocation step during translation elongation. During this step, the ribosome changes from the pre-translocational (PRE) to the post-translocational (POST) state as the newly formed A-site-bound peptidyl-tRNA and P-site-bound deacylated tRNA move to the P and E sites, respectively. Catalyzes the coordinated movement of the two tRNA molecules, the mRNA and conformational changes in the ribosome. The polypeptide is Elongation factor G (Listeria welshimeri serovar 6b (strain ATCC 35897 / DSM 20650 / CCUG 15529 / CIP 8149 / NCTC 11857 / SLCC 5334 / V8)).